Here is an 88-residue protein sequence, read N- to C-terminus: Molybdopterin synthase sulfur carrier subunit (88 aa).

Gly88 bears the 1-thioglycine; alternate mark. Residue Gly88 is modified to Glycyl adenylate; alternate.

This sequence belongs to the MoaD family. MOCS2A subfamily. In terms of assembly, heterotetramer; composed of 2 small (MOCS2A) and 2 large (MOCS2B) subunits. Post-translationally, C-terminal thiocarboxylation occurs in 2 steps, it is first acyl-adenylated (-COAMP) via the hesA/moeB/thiF part of MOCS3, then thiocarboxylated (-COSH) via the rhodanese domain of MOCS3. As to expression, widely expressed. Highest levels are found in heart and skeletal muscle. Lower levels are present in brain, kidney and pancreas. Very low levels are found in lung and peripheral blood leukocytes.

The protein localises to the cytoplasm. It localises to the cytosol. It functions in the pathway cofactor biosynthesis; molybdopterin biosynthesis. Its function is as follows. Acts as a sulfur carrier required for molybdopterin biosynthesis. Component of the molybdopterin synthase complex that catalyzes the conversion of precursor Z into molybdopterin by mediating the incorporation of 2 sulfur atoms into precursor Z to generate a dithiolene group. In the complex, serves as sulfur donor by being thiocarboxylated (-COSH) at its C-terminus by MOCS3. After interaction with MOCS2B, the sulfur is then transferred to precursor Z to form molybdopterin. In Homo sapiens (Human), this protein is Molybdopterin synthase sulfur carrier subunit.